The chain runs to 360 residues: Phospho-N-acetylmuramoyl-pentapeptide-transferase (360 aa).

Topologically, residues 1–25 (MLVWLAEHLVKYYSGFNVFSYLTFR) are periplasmic. Residues 26–46 (AIVSLLTALFISLWMGPRMIA) form a helical membrane-spanning segment. Over 47 to 71 (HLQKLSFGQVVRNDGPESHFSKRGT) the chain is Cytoplasmic. A helical transmembrane segment spans residues 72–92 (PTMGGIMILTAIVISVLLWAY). A topological domain (periplasmic) is located at residue proline 93. A helical membrane pass occupies residues 94–114 (SNPYVWCVLVVLVGYGIIGFV). Residues 115–131 (DDYRKVVRKDTKGLIAR) lie on the Cytoplasmic side of the membrane. The chain crosses the membrane as a helical span at residues 132 to 152 (WKYFWMSVIALGVAFALYLAG). Topologically, residues 153–167 (KDTPATQLVVPFFKD) are periplasmic. Residues 168–188 (VMPQLGLFYILLAYFVIVGTG) traverse the membrane as a helical segment. The Cytoplasmic segment spans residues 189 to 198 (NAVNLTDGLD). Residues 199-219 (GLAIMPTVFVAGGFALVAWAT) form a helical membrane-spanning segment. The Periplasmic portion of the chain corresponds to 220-235 (GNMNFASYLHIPYLRH). Residues 236–256 (AGELVIVCTAIVGAGLGFLWF) form a helical membrane-spanning segment. Residues 257 to 262 (NTYPAQ) are Cytoplasmic-facing. The helical transmembrane segment at 263–283 (VFMGDVGSLALGGALGIIAVL) threads the bilayer. Over 284 to 287 (LRQE) the chain is Periplasmic. Residues 288-308 (FLLVIMGGVFVVETLSVILQV) form a helical membrane-spanning segment. Topologically, residues 309–337 (GSFKLRGQRIFRMAPIHHHYELKGWPEPR) are cytoplasmic. The helical transmembrane segment at 338-358 (VIVRFWIISLMLVLIGLATLK) threads the bilayer. The Periplasmic segment spans residues 359-360 (VR).

This sequence belongs to the glycosyltransferase 4 family. MraY subfamily. The cofactor is Mg(2+).

The protein localises to the cell inner membrane. The catalysed reaction is UDP-N-acetyl-alpha-D-muramoyl-L-alanyl-gamma-D-glutamyl-meso-2,6-diaminopimeloyl-D-alanyl-D-alanine + di-trans,octa-cis-undecaprenyl phosphate = di-trans,octa-cis-undecaprenyl diphospho-N-acetyl-alpha-D-muramoyl-L-alanyl-D-glutamyl-meso-2,6-diaminopimeloyl-D-alanyl-D-alanine + UMP. It functions in the pathway cell wall biogenesis; peptidoglycan biosynthesis. Catalyzes the initial step of the lipid cycle reactions in the biosynthesis of the cell wall peptidoglycan: transfers peptidoglycan precursor phospho-MurNAc-pentapeptide from UDP-MurNAc-pentapeptide onto the lipid carrier undecaprenyl phosphate, yielding undecaprenyl-pyrophosphoryl-MurNAc-pentapeptide, known as lipid I. The sequence is that of Phospho-N-acetylmuramoyl-pentapeptide-transferase from Escherichia coli O7:K1 (strain IAI39 / ExPEC).